The chain runs to 371 residues: Dual-specificity RNA methyltransferase RlmN (371 aa).

The Proton acceptor role is filled by glutamate 114. The Radical SAM core domain occupies 120 to 352 (EEDHFTLCVS…VMTRQSKGAD (233 aa)). A disulfide bridge connects residues cysteine 127 and cysteine 357. Positions 134, 138, and 141 each coordinate [4Fe-4S] cluster. Residues 183–184 (GE), serine 216, 238–240 (SLN), and asparagine 314 contribute to the S-adenosyl-L-methionine site. Residue cysteine 357 is the S-methylcysteine intermediate of the active site.

The protein belongs to the radical SAM superfamily. RlmN family. The cofactor is [4Fe-4S] cluster.

It is found in the cytoplasm. The catalysed reaction is adenosine(2503) in 23S rRNA + 2 reduced [2Fe-2S]-[ferredoxin] + 2 S-adenosyl-L-methionine = 2-methyladenosine(2503) in 23S rRNA + 5'-deoxyadenosine + L-methionine + 2 oxidized [2Fe-2S]-[ferredoxin] + S-adenosyl-L-homocysteine. It catalyses the reaction adenosine(37) in tRNA + 2 reduced [2Fe-2S]-[ferredoxin] + 2 S-adenosyl-L-methionine = 2-methyladenosine(37) in tRNA + 5'-deoxyadenosine + L-methionine + 2 oxidized [2Fe-2S]-[ferredoxin] + S-adenosyl-L-homocysteine. Its function is as follows. Specifically methylates position 2 of adenine 2503 in 23S rRNA and position 2 of adenine 37 in tRNAs. m2A2503 modification seems to play a crucial role in the proofreading step occurring at the peptidyl transferase center and thus would serve to optimize ribosomal fidelity. The polypeptide is Dual-specificity RNA methyltransferase RlmN (Desulfosudis oleivorans (strain DSM 6200 / JCM 39069 / Hxd3) (Desulfococcus oleovorans)).